The sequence spans 208 residues: Uracil phosphoribosyltransferase (208 aa).

5-phospho-alpha-D-ribose 1-diphosphate is bound by residues arginine 78, arginine 103, and 130–138; that span reads DPMLATGGS. Uracil-binding positions include isoleucine 193 and 198–200; that span reads GDA. Aspartate 199 is a 5-phospho-alpha-D-ribose 1-diphosphate binding site.

It belongs to the UPRTase family. Mg(2+) serves as cofactor.

It carries out the reaction UMP + diphosphate = 5-phospho-alpha-D-ribose 1-diphosphate + uracil. The protein operates within pyrimidine metabolism; UMP biosynthesis via salvage pathway; UMP from uracil: step 1/1. Its activity is regulated as follows. Allosterically activated by GTP. In terms of biological role, catalyzes the conversion of uracil and 5-phospho-alpha-D-ribose 1-diphosphate (PRPP) to UMP and diphosphate. In Shewanella frigidimarina (strain NCIMB 400), this protein is Uracil phosphoribosyltransferase.